The sequence spans 312 residues: Olfactory receptor 2M7 (312 aa).

Residues 1–25 (MAWENQTFNSDFLLLGIFNHSPTHT) lie on the Extracellular side of the membrane. The N-linked (GlcNAc...) asparagine glycan is linked to asparagine 5. The helical transmembrane segment at 26 to 49 (FLFFLVLAIFSVAFMGNSIMVLLI) threads the bilayer. At 50–57 (YLDTQLHT) the chain is on the cytoplasmic side. The helical transmembrane segment at 58–79 (PMYFLLSQLSLMDLMLICTTVP) threads the bilayer. The Extracellular portion of the chain corresponds to 80–100 (KMAFNYLSGSKSISMAGCATQ). The cysteines at positions 97 and 189 are disulfide-linked. The helical transmembrane segment at 101 to 120 (IFFYISLLGSECFLLAVMSY) threads the bilayer. Topologically, residues 121–139 (DRYTAICHPLRYTNLMRPK) are cytoplasmic. A helical membrane pass occupies residues 140-158 (ICGLMTAFSWILGSTDGII). Over 159 to 195 (DAVATFSFSYCGSREIAHFCCDFPSLLILSCNDTSIF) the chain is Extracellular. The helical transmembrane segment at 196-219 (EEVIFICCIVMLVFPVAIIITSYA) threads the bilayer. The Cytoplasmic segment spans residues 220–236 (RVILAVIHMGSGEGRRK). Residues 237-259 (AFTTCSSHLMVVGMYYGAGLFMC) traverse the membrane as a helical segment. Residues 260–272 (IQPTSHHSPMQDK) lie on the Extracellular side of the membrane. Residues 273 to 292 (MVSVFYTIVTPMLNPLIYSL) form a helical membrane-spanning segment. At 293–311 (RNKEVTRALMKILGKGKSG) the chain is on the cytoplasmic side.

Belongs to the G-protein coupled receptor 1 family.

Its subcellular location is the cell membrane. Functionally, odorant receptor. This is Olfactory receptor 2M7 (OR2M7) from Homo sapiens (Human).